A 279-amino-acid polypeptide reads, in one-letter code: 4-hydroxy-3-methylbut-2-enyl diphosphate reductase (279 aa).

Cys-12 is a [4Fe-4S] cluster binding site. (2E)-4-hydroxy-3-methylbut-2-enyl diphosphate-binding residues include His-42 and His-74. Residues His-42 and His-74 each coordinate dimethylallyl diphosphate. Isopentenyl diphosphate-binding residues include His-42 and His-74. Cys-96 serves as a coordination point for [4Fe-4S] cluster. Position 124 (His-124) interacts with (2E)-4-hydroxy-3-methylbut-2-enyl diphosphate. His-124 contributes to the dimethylallyl diphosphate binding site. His-124 is a binding site for isopentenyl diphosphate. Residue Glu-126 is the Proton donor of the active site. Thr-162 serves as a coordination point for (2E)-4-hydroxy-3-methylbut-2-enyl diphosphate. Cys-190 serves as a coordination point for [4Fe-4S] cluster. Ser-218, Ser-219, Asn-220, and Ser-263 together coordinate (2E)-4-hydroxy-3-methylbut-2-enyl diphosphate. Residues Ser-218, Ser-219, Asn-220, and Ser-263 each contribute to the dimethylallyl diphosphate site. Residues Ser-218, Ser-219, Asn-220, and Ser-263 each contribute to the isopentenyl diphosphate site.

Belongs to the IspH family. It depends on [4Fe-4S] cluster as a cofactor.

The catalysed reaction is isopentenyl diphosphate + 2 oxidized [2Fe-2S]-[ferredoxin] + H2O = (2E)-4-hydroxy-3-methylbut-2-enyl diphosphate + 2 reduced [2Fe-2S]-[ferredoxin] + 2 H(+). It carries out the reaction dimethylallyl diphosphate + 2 oxidized [2Fe-2S]-[ferredoxin] + H2O = (2E)-4-hydroxy-3-methylbut-2-enyl diphosphate + 2 reduced [2Fe-2S]-[ferredoxin] + 2 H(+). It participates in isoprenoid biosynthesis; dimethylallyl diphosphate biosynthesis; dimethylallyl diphosphate from (2E)-4-hydroxy-3-methylbutenyl diphosphate: step 1/1. Its pathway is isoprenoid biosynthesis; isopentenyl diphosphate biosynthesis via DXP pathway; isopentenyl diphosphate from 1-deoxy-D-xylulose 5-phosphate: step 6/6. Functionally, catalyzes the conversion of 1-hydroxy-2-methyl-2-(E)-butenyl 4-diphosphate (HMBPP) into a mixture of isopentenyl diphosphate (IPP) and dimethylallyl diphosphate (DMAPP). Acts in the terminal step of the DOXP/MEP pathway for isoprenoid precursor biosynthesis. This Alkaliphilus oremlandii (strain OhILAs) (Clostridium oremlandii (strain OhILAs)) protein is 4-hydroxy-3-methylbut-2-enyl diphosphate reductase.